A 349-amino-acid polypeptide reads, in one-letter code: S-adenosylmethionine:tRNA ribosyltransferase-isomerase (349 aa).

This sequence belongs to the QueA family. In terms of assembly, monomer.

Its subcellular location is the cytoplasm. It carries out the reaction 7-aminomethyl-7-carbaguanosine(34) in tRNA + S-adenosyl-L-methionine = epoxyqueuosine(34) in tRNA + adenine + L-methionine + 2 H(+). It participates in tRNA modification; tRNA-queuosine biosynthesis. Its function is as follows. Transfers and isomerizes the ribose moiety from AdoMet to the 7-aminomethyl group of 7-deazaguanine (preQ1-tRNA) to give epoxyqueuosine (oQ-tRNA). This is S-adenosylmethionine:tRNA ribosyltransferase-isomerase from Pseudomonas putida (strain ATCC 700007 / DSM 6899 / JCM 31910 / BCRC 17059 / LMG 24140 / F1).